The chain runs to 120 residues: uncharacterized protein (120 aa).

The N-terminal stretch at 1–22 is a signal peptide; it reads MSTSGMLFIFATFCPCFLSCCA. At 23–59 the chain is on the extracellular side; sequence FMSHWKLKDFSFRFLRMCGERSLVVCYPLKLLKQIRS. The chain crosses the membrane as a helical span at residues 60-80; it reads LFSIAIGHLSLMLIEGSANLL. Residues 81–120 are Cytoplasmic-facing; the sequence is SLEEISRTLLRILDFVGNKNMRTYLEVPLCRWHISQARPN.

The protein localises to the membrane. This is an uncharacterized protein from Schizosaccharomyces pombe (strain 972 / ATCC 24843) (Fission yeast).